A 149-amino-acid polypeptide reads, in one-letter code: Nucleoside diphosphate kinase 1 (149 aa).

Positions 9, 57, 85, 91, 102, and 112 each coordinate ATP. Residue histidine 115 is the Pros-phosphohistidine intermediate of the active site.

As to quaternary structure, homohexamer. Mg(2+) is required as a cofactor.

It carries out the reaction a 2'-deoxyribonucleoside 5'-diphosphate + ATP = a 2'-deoxyribonucleoside 5'-triphosphate + ADP. The enzyme catalyses a ribonucleoside 5'-diphosphate + ATP = a ribonucleoside 5'-triphosphate + ADP. Its function is as follows. Major role in the synthesis of nucleoside triphosphates other than ATP. The ATP gamma phosphate is transferred to the NDP beta phosphate via a ping-pong mechanism, using a phosphorylated active-site intermediate. This NDK is microtubule-associated. This chain is Nucleoside diphosphate kinase 1 (NDKR), found in Oryza sativa subsp. indica (Rice).